The chain runs to 60 residues: Toxin TdNa2 (60 aa).

Residues Arg-1 to His-59 enclose the LCN-type CS-alpha/beta domain. Intrachain disulfides connect Cys-11/Cys-58, Cys-15/Cys-37, Cys-23/Cys-42, and Cys-27/Cys-44.

Belongs to the long (4 C-C) scorpion toxin superfamily. Sodium channel inhibitor family. Beta subfamily. Expressed by the venom gland.

Its subcellular location is the secreted. In terms of biological role, inhibits the sodium currents (Nav) in an apparent irreversible manner. Produces small depolarization and induces repetitive firing in squid axons. Is specific for arthropods (crickets, triatomides, crabs and squids), but is non-toxic to mice. This chain is Toxin TdNa2, found in Tityus discrepans (Venezuelan scorpion).